The primary structure comprises 236 residues: Phospholipid hydroperoxide glutathione peroxidase, chloroplastic (236 aa).

The transit peptide at 1-64 (MASMAFSTTF…SNFPIVPSKT (64 aa)) directs the protein to the chloroplast. Residue Cys-111 is part of the active site.

Belongs to the glutathione peroxidase family.

The protein resides in the plastid. It localises to the chloroplast stroma. The enzyme catalyses a hydroperoxy polyunsaturated fatty acid + 2 glutathione = a hydroxy polyunsaturated fatty acid + glutathione disulfide + H2O. In terms of biological role, protects cells and enzymes from oxidative damage, by catalyzing the reduction of hydrogen peroxide, lipid peroxides and organic hydroperoxide, by glutathione. In Pisum sativum (Garden pea), this protein is Phospholipid hydroperoxide glutathione peroxidase, chloroplastic.